The chain runs to 596 residues: Elongation factor 4 (596 aa).

The tr-type G domain occupies Ser2–Glu184. GTP contacts are provided by residues Asp14 to Thr19 and Asn131 to Asp134.

Belongs to the TRAFAC class translation factor GTPase superfamily. Classic translation factor GTPase family. LepA subfamily.

It localises to the cell inner membrane. It carries out the reaction GTP + H2O = GDP + phosphate + H(+). In terms of biological role, required for accurate and efficient protein synthesis under certain stress conditions. May act as a fidelity factor of the translation reaction, by catalyzing a one-codon backward translocation of tRNAs on improperly translocated ribosomes. Back-translocation proceeds from a post-translocation (POST) complex to a pre-translocation (PRE) complex, thus giving elongation factor G a second chance to translocate the tRNAs correctly. Binds to ribosomes in a GTP-dependent manner. The sequence is that of Elongation factor 4 from Pseudomonas putida (strain GB-1).